Consider the following 191-residue polypeptide: dCTP deaminase, dUMP-forming (191 aa).

DCTP-binding positions include 101–106 (KSSLGR), Asp119, 127–129 (TLE), Gln148, Tyr162, and Gln174. The active-site Proton donor/acceptor is Glu129.

The protein belongs to the dCTP deaminase family. Homotrimer.

The catalysed reaction is dCTP + 2 H2O = dUMP + NH4(+) + diphosphate. The protein operates within pyrimidine metabolism; dUMP biosynthesis; dUMP from dCTP: step 1/1. Its function is as follows. Bifunctional enzyme that catalyzes both the deamination of dCTP to dUTP and the hydrolysis of dUTP to dUMP without releasing the toxic dUTP intermediate. This Streptomyces coelicolor (strain ATCC BAA-471 / A3(2) / M145) protein is dCTP deaminase, dUMP-forming.